The chain runs to 249 residues: Sugar fermentation stimulation protein homolog (249 aa).

This sequence belongs to the SfsA family.

The chain is Sugar fermentation stimulation protein homolog from Rhizobium rhizogenes (strain K84 / ATCC BAA-868) (Agrobacterium radiobacter).